We begin with the raw amino-acid sequence, 189 residues long: UPF0316 protein Sca_1484 (189 aa).

3 consecutive transmembrane segments (helical) span residues Pro8–Val28, Val40–Met60, and Phe66–Ile86.

This sequence belongs to the UPF0316 family.

The protein resides in the cell membrane. The chain is UPF0316 protein Sca_1484 from Staphylococcus carnosus (strain TM300).